Consider the following 155-residue polypeptide: Small ribosomal subunit protein uS7c (155 aa).

It belongs to the universal ribosomal protein uS7 family. As to quaternary structure, part of the 30S ribosomal subunit.

The protein localises to the plastid. It localises to the chloroplast. Its function is as follows. One of the primary rRNA binding proteins, it binds directly to 16S rRNA where it nucleates assembly of the head domain of the 30S subunit. The polypeptide is Small ribosomal subunit protein uS7c (rps7) (Cedrus deodara (Deodar cedar)).